Reading from the N-terminus, the 523-residue chain is Cytochrome P450 CYP82J17 (523 aa).

Residues 4 to 24 traverse the membrane as a helical segment; sequence FLSQPITIVLAILSVLLYNIW. Residue Cys462 participates in heme binding.

This sequence belongs to the cytochrome P450 family. In terms of tissue distribution, mainly expressed in leaves and seed pods and, to a lower extent, in flowers and stems.

It is found in the membrane. It participates in steroid metabolism; cholesterol metabolism. Involved in the biosynthesis of spiroketal steroid and saponin natural products from cholesterol such as diosgenin and analogs (e.g. furostanol and spirostanol), plant defense compounds used as main precursors for the industrial production of steroid hormones. During the 5,6-spiroketalization of cholesterol, may catalyze the 27-monohydroxylation of furostanol-type steroid to an intermediate product that undergoes a stereospecific formation of the terminal heterocycle to yield diosgenin. This is Cytochrome P450 CYP82J17 from Trigonella foenum-graecum (Fenugreek).